A 206-amino-acid chain; its full sequence is Large ribosomal subunit protein uL4 (206 aa).

It belongs to the universal ribosomal protein uL4 family. As to quaternary structure, part of the 50S ribosomal subunit.

In terms of biological role, one of the primary rRNA binding proteins, this protein initially binds near the 5'-end of the 23S rRNA. It is important during the early stages of 50S assembly. It makes multiple contacts with different domains of the 23S rRNA in the assembled 50S subunit and ribosome. Forms part of the polypeptide exit tunnel. The polypeptide is Large ribosomal subunit protein uL4 (Nitratidesulfovibrio vulgaris (strain ATCC 29579 / DSM 644 / CCUG 34227 / NCIMB 8303 / VKM B-1760 / Hildenborough) (Desulfovibrio vulgaris)).